A 150-amino-acid polypeptide reads, in one-letter code: Snake venom vascular endothelial growth factor toxin barietin (150 aa).

An N-terminal signal peptide occupies residues 1–24 (MAAYLLAVAILFCIQGWPSGTVQG). Glu25 carries the pyrrolidone carboxylic acid (Glu) modification. 3 cysteine pairs are disulfide-bonded: Cys38–Cys80, Cys69–Cys115, and Cys73–Cys117. Residues 119–150 (PRSGSRVNIGKHKRSPEEGEREPSSPLTPGSL) form a disordered region. Residues 122–150 (GSRVNIGKHKRSPEEGEREPSSPLTPGSL) constitute a propeptide that is removed on maturation.

This sequence belongs to the PDGF/VEGF growth factor family. Snake venom VEGF subfamily. Homodimer; disulfide-linked. Interacts with high affinity with VEGF receptor-2 (KDR), and with a lower affinity with VEGF receptor-1 (FLT1). Does not bind VEGF receptor-3 (FLT4) and neuropilin-1 (NRP1). Expressed by the venom gland.

The protein localises to the secreted. In terms of biological role, snake venom VEGFs that may contribute to venom dispersion and prey subjugation by inducing vascular permeability and hypotension. This protein induces an increase in capillary permeability after intradermal injection, as well as a drastic hypotensive effect after intravenous injection. The hypotension is mediated by nitric oxide (NO), which is produced by VEGF-activated endothelium NO synthase. Also induces angiogenesis in vitro, probably through VEGF receptor (KDR/VEGFR-2) signaling. This chain is Snake venom vascular endothelial growth factor toxin barietin, found in Bitis arietans (African puff adder).